Consider the following 177-residue polypeptide: Ribulose bisphosphate carboxylase small subunit, chloroplastic 4 (177 aa).

A chloroplast-targeting transit peptide spans M1–S56.

Belongs to the RuBisCO small chain family. As to quaternary structure, heterohexadecamer of 8 large and 8 small subunits.

It localises to the plastid. The protein resides in the chloroplast. Functionally, ruBisCO catalyzes two reactions: the carboxylation of D-ribulose 1,5-bisphosphate, the primary event in carbon dioxide fixation, as well as the oxidative fragmentation of the pentose substrate. Both reactions occur simultaneously and in competition at the same active site. Although the small subunit is not catalytic it is essential for maximal activity. The chain is Ribulose bisphosphate carboxylase small subunit, chloroplastic 4 from Lemna gibba (Swollen duckweed).